Reading from the N-terminus, the 131-residue chain is L-ectoine synthase (131 aa).

The protein belongs to the ectoine synthase family.

It carries out the reaction (2S)-4-acetamido-2-aminobutanoate = L-ectoine + H2O. It functions in the pathway amine and polyamine biosynthesis; ectoine biosynthesis; L-ectoine from L-aspartate 4-semialdehyde: step 3/3. Its function is as follows. Catalyzes the circularization of gamma-N-acetyl-alpha,gamma-diaminobutyric acid (ADABA) to ectoine (1,4,5,6-tetrahydro-2-methyl-4-pyrimidine carboxylic acid), which is an excellent osmoprotectant. The protein is L-ectoine synthase of Nocardia farcinica (strain IFM 10152).